A 118-amino-acid polypeptide reads, in one-letter code: uncharacterized protein (118 aa).

Transmembrane regions (helical) follow at residues 17–37 (IIII…FAIL), 60–80 (INYT…IMIF), and 90–110 (YIEQ…GSFW).

The protein localises to the membrane. This is an uncharacterized protein from Acanthamoeba polyphaga mimivirus (APMV).